Consider the following 180-residue polypeptide: ATP-dependent protease subunit HslV (180 aa).

Residue threonine 5 is part of the active site. Glycine 165, cysteine 168, and threonine 171 together coordinate Na(+).

It belongs to the peptidase T1B family. HslV subfamily. As to quaternary structure, a double ring-shaped homohexamer of HslV is capped on each side by a ring-shaped HslU homohexamer. The assembly of the HslU/HslV complex is dependent on binding of ATP.

It is found in the cytoplasm. The enzyme catalyses ATP-dependent cleavage of peptide bonds with broad specificity.. Allosterically activated by HslU binding. Its function is as follows. Protease subunit of a proteasome-like degradation complex believed to be a general protein degrading machinery. This chain is ATP-dependent protease subunit HslV, found in Helicobacter pylori (strain P12).